The sequence spans 2820 residues: Neurofibromin (2820 aa).

Position 2 is an N-acetylalanine (A2). Residues S866 and S878 each carry the phosphoserine modification. The 211-residue stretch at 1253 to 1463 folds into the Ras-GAP domain; it reads HLLYQLLWNM…DLARRFFLDI (211 aa). The CRAL-TRIO domain maps to 1561 to 1719; it reads EKEEFKALKT…ATLALEEDLK (159 aa). The lipid binding stretch occupies residues 1561 to 1818; that stretch reads EKEEFKALKT…RTRWELSQPD (258 aa). Phosphoserine is present on residues S2169 and S2448. Positions 2457–2482 are disordered; sequence YPIHHGDPSSRTLKETQPWSSPRGSE. Basic and acidic residues predominate over residues 2458–2470; sequence PIHHGDPSSRTLK. At T2495 the chain carries Phosphothreonine. Phosphoserine is present on residues S2496, S2502, S2504, and S2524. A Bipartite nuclear localization signal motif is present at residues 2536–2552; sequence KRQEMESGITTPPKMRR. T2546 carries the post-translational modification Phosphothreonine. Phosphoserine is present on residues S2578, S2783, and S2798. The tract at residues 2768–2820 is disordered; that stretch reads TSQHSPGIDKENVELSPTTGHCNSGRTRHGSASQVQKQRSAGSFKRNSIKKIV. Residues 2782 to 2808 are compositionally biased toward polar residues; sequence LSPTTGHCNSGRTRHGSASQVQKQRSA.

Interacts with HTR6. Interacts with SPRED2. Ubiquitinated by RNF7/RBX2, leading to its degradation.

It is found in the nucleus. Its subcellular location is the nucleolus. The protein resides in the cell membrane. In terms of biological role, stimulates the GTPase activity of Ras. NF1 shows greater affinity for Ras GAP, but lower specific activity. May be a regulator of Ras activity. This chain is Neurofibromin (Nf1), found in Rattus norvegicus (Rat).